A 649-amino-acid polypeptide reads, in one-letter code: MAPRVATGTPEPNGGGGGKIDNTVEITPTSNGQVGTLGDAVPTEQLQGEREREREGEGDAGGDGLGSSLSLAVPPGPLSFEALLAQVGALGGGQQLQLGLCCLPVLFVALGMASDPIFTLAPPLHCHYGAFPPNASGWEQPPNASGVSVASAALAASAASRVATSTDPSCSGFAPPDFNHCLKDWDYNGLPVLTTNAIGQWDLVCDLGWQVILEQILFILGFASGYLFLGYPADRFGRRGIVLLTLGLVGPCGVGGAAAGSSTGVMALRFLLGFLLAGVDLGVYLMRLELCDPTQRLRVALAGELVGVGGHFLFLGLALVSKDWRFLQRMITAPCILFLFYGWPGLFLESARWLIVKRQIEEAQSVLRILAERNRPHGQMLGEEAQEALQDLENTCPLPATSSFSFASLLNYRNIWKNLLILGFTNFIAHAIRHCYQPVGGGGSPSDFYLCSLLASGTAALACVFLGVTVDRFGRRGILLLSMTLTGIASLVLLGLWDCEHPIFPTVWAQQGNPNRDLNEAAITTFSVLGLFSSQAAAILSTLLAAEVIPTTVRGRGLGLIMALGALGGLSGPAQRLHMGHGAFLQHVVLAACALLCILSIMLLPETKRKLLPEVLRDGELCRRPSLLRQPPPTRCDHVPLLATPNPAL.

Residues 1 to 70 (MAPRVATGTP…GGDGLGSSLS (70 aa)) form a disordered region. A compositionally biased stretch (polar residues) spans 24–34 (VEITPTSNGQV). Positions 47-57 (QGEREREREGE) are enriched in basic and acidic residues. 2 N-linked (GlcNAc...) asparagine glycosylation sites follow: N134 and N143. 11 helical membrane-spanning segments follow: residues 211-231 (VILE…FLGY), 240-260 (GIVL…AAAG), 265-285 (VMAL…GVYL), 300-320 (ALAG…LALV), 330-350 (MITA…FLES), 414-433 (NIWK…HAIR), 448-468 (FYLC…FLGV), 477-497 (GILL…LGLW), 526-546 (FSVL…LLAA), 557-577 (GLGL…AQRL), and 584-604 (FLQH…IMLL).

The protein belongs to the major facilitator (TC 2.A.1) superfamily. Organic cation transporter (TC 2.A.1.19) family. As to expression, expressed in brain.

The protein resides in the cell membrane. Its subcellular location is the vacuole membrane. Its function is as follows. Cell surface receptor for LCN2 (24p3) that plays a key role in iron homeostasis and transport. Able to bind iron-bound LCN2 (holo-24p3), followed by internalization of holo-24p3 and release of iron, thereby increasing intracellular iron concentration and leading to inhibition of apoptosis. Also binds iron-free LCN2 (apo-24p3), followed by internalization of apo-24p3 and its association with an intracellular siderophore, leading to iron chelation and iron transfer to the extracellular medium, thereby reducing intracellular iron concentration and resulting in apoptosis. This Homo sapiens (Human) protein is Solute carrier family 22 member 17 (SLC22A17).